The primary structure comprises 1059 residues: DNA-directed RNA polymerase subunit beta (1059 aa).

Belongs to the RNA polymerase beta chain family. In terms of assembly, in plastids the minimal PEP RNA polymerase catalytic core is composed of four subunits: alpha, beta, beta', and beta''. When a (nuclear-encoded) sigma factor is associated with the core the holoenzyme is formed, which can initiate transcription (Potential).

The protein resides in the plastid. It localises to the apicoplast. It carries out the reaction RNA(n) + a ribonucleoside 5'-triphosphate = RNA(n+1) + diphosphate. Functionally, DNA-dependent RNA polymerase catalyzes the transcription of DNA into RNA using the four ribonucleoside triphosphates as substrates. The chain is DNA-directed RNA polymerase subunit beta (rpoB) from Eimeria tenella (Coccidian parasite).